A 212-amino-acid polypeptide reads, in one-letter code: MKKAMLGKKIGMTQIFDENGLVIPVTVVEAGPLTVVQKKTVETDGYDAIKVGYVKVAEKKLSKPNLGQFSKTKLAPMKHLKEFRLEDISGFEVGQEIKAENMFQSGDKIDVSGVSKGKGFQGVTKRYGQRTGPNTHGSMYHRRIGSMGSGTNPGRVFKGKKLPGHMGRETITVQNLEVVRVDSDRNLILIKGAIPGPKGGLLVIKNTVKSGK.

The protein belongs to the universal ribosomal protein uL3 family. Part of the 50S ribosomal subunit. Forms a cluster with proteins L14 and L19.

Its function is as follows. One of the primary rRNA binding proteins, it binds directly near the 3'-end of the 23S rRNA, where it nucleates assembly of the 50S subunit. This is Large ribosomal subunit protein uL3 from Ruminiclostridium cellulolyticum (strain ATCC 35319 / DSM 5812 / JCM 6584 / H10) (Clostridium cellulolyticum).